The chain runs to 647 residues: Sialidase (647 aa).

Positions 1–37 are cleaved as a signal peptide; the sequence is MTANPYLRRLPRRRAVSFLLAPALAAATVAGASPAQA. Residue R68 participates in substrate binding. Catalysis depends on D92, which acts as the Proton acceptor. 3 BNR repeats span residues 102–113, 175–186, and 239–250; these read RRSTDGGRTWGE, ATSTDGGLTWSH, and VYSDDHGRTWRA. The active-site Nucleophile is the E260. A substrate-binding site is contributed by R276. 2 BNR repeats span residues 287-298 and 348-359; these read AVSTDGGHSYGP and RMSCDDGQTWPV. The active-site Nucleophile is the Y370. Residues 496–646 enclose the F5/8 type C domain; it reads TFTVTVGLLD…AVAELEVEGQ (151 aa).

This sequence belongs to the glycosyl hydrolase 33 family.

The protein localises to the secreted. It catalyses the reaction Hydrolysis of alpha-(2-&gt;3)-, alpha-(2-&gt;6)-, alpha-(2-&gt;8)- glycosidic linkages of terminal sialic acid residues in oligosaccharides, glycoproteins, glycolipids, colominic acid and synthetic substrates.. Its function is as follows. To release sialic acids for use as carbon and energy sources for this non-pathogenic bacterium while in pathogenic microorganisms, sialidases have been suggested to be pathogenic factors. The polypeptide is Sialidase (nedA) (Micromonospora viridifaciens).